The following is a 64-amino-acid chain: uncharacterized protein (64 aa).

This is an uncharacterized protein from Bos taurus (Bovine).